The chain runs to 246 residues: Major prion protein (246 aa).

Positions 1 to 15 (MLVLFVATWSDLGLC) are cleaved as a signal peptide. Positions 16-223 (KKRPKPGGWN…ESQAYYQRGS (208 aa)) are interaction with GRB2, ERI3 and SYN1. A disordered region spans residues 18–102 (RPKPGGWNTG…HKPSKPKTSM (85 aa)). Repeat copies occupy residues 44–52 (PQGGGGWGQ), 53–60 (PHGGGWGQ), 61–68 (PHGGGWGQ), 69–76 (PHGGGWGQ), and 77–84 (PHGGGWGQ). A 5 X 8 AA tandem repeats of P-H-G-G-G-W-G-Q region spans residues 44-84 (PQGGGGWGQPHGGGWGQPHGGGWGQPHGGGWGQPHGGGWGQ). Positions 45–88 (QGGGGWGQPHGGGWGQPHGGGWGQPHGGGWGQPHGGGWGQGGGT) are enriched in gly residues. Cu(2+) contacts are provided by H54, G55, G56, H62, G63, G64, H70, G71, G72, H78, G79, and G80. Residues 91 to 102 (QWHKPSKPKTSM) are compositionally biased toward basic residues. C172 and C207 are oxidised to a cystine. 2 N-linked (GlcNAc...) asparagine glycosylation sites follow: N174 and N190. A lipid anchor (GPI-anchor amidated serine) is attached at S223. The propeptide at 224–246 (SMVLFSSPPVILLISFLIFLIVG) is removed in mature form.

It belongs to the prion family. Monomer and homodimer. Has a tendency to aggregate into amyloid fibrils containing a cross-beta spine, formed by a steric zipper of superposed beta-strands. Soluble oligomers may represent an intermediate stage on the path to fibril formation. Copper binding may promote oligomerization. Interacts with GRB2, APP, ERI3/PRNPIP and SYN1. Mislocalized cytosolically exposed PrP interacts with MGRN1; this interaction alters MGRN1 subcellular location and causes lysosomal enlargement. Interacts with KIAA1191.

Its subcellular location is the cell membrane. The protein localises to the golgi apparatus. Its primary physiological function is unclear. Has cytoprotective activity against internal or environmental stresses. May play a role in neuronal development and synaptic plasticity. May be required for neuronal myelin sheath maintenance. May play a role in iron uptake and iron homeostasis. Soluble oligomers are toxic to cultured neuroblastoma cells and induce apoptosis (in vitro). Association with GPC1 (via its heparan sulfate chains) targets PRNP to lipid rafts. Also provides Cu(2+) or Zn(2+) for the ascorbate-mediated GPC1 deaminase degradation of its heparan sulfate side chains. The polypeptide is Major prion protein (PRNP) (Cercocebus atys (Sooty mangabey)).